Here is a 430-residue protein sequence, read N- to C-terminus: Glutamyl-tRNA reductase (430 aa).

Substrate contacts are provided by residues 49–52 (TCNR), Ser-109, 114–116 (EGQ), and Gln-120. Catalysis depends on Cys-50, which acts as the Nucleophile. Position 189–194 (189–194 (GAGKMA)) interacts with NADP(+).

This sequence belongs to the glutamyl-tRNA reductase family. In terms of assembly, homodimer.

It carries out the reaction (S)-4-amino-5-oxopentanoate + tRNA(Glu) + NADP(+) = L-glutamyl-tRNA(Glu) + NADPH + H(+). It functions in the pathway porphyrin-containing compound metabolism; protoporphyrin-IX biosynthesis; 5-aminolevulinate from L-glutamyl-tRNA(Glu): step 1/2. It participates in porphyrin-containing compound metabolism; chlorophyll biosynthesis. Its function is as follows. Catalyzes the NADPH-dependent reduction of glutamyl-tRNA(Glu) to glutamate 1-semialdehyde (GSA). The polypeptide is Glutamyl-tRNA reductase (Crocosphaera subtropica (strain ATCC 51142 / BH68) (Cyanothece sp. (strain ATCC 51142))).